The following is a 76-amino-acid chain: Translational regulator CsrA (76 aa).

The protein belongs to the CsrA/RsmA family. As to quaternary structure, homodimer; the beta-strands of each monomer intercalate to form a hydrophobic core, while the alpha-helices form wings that extend away from the core.

Its subcellular location is the cytoplasm. Its function is as follows. A translational regulator that binds mRNA to regulate translation initiation and/or mRNA stability. Usually binds in the 5'-UTR at or near the Shine-Dalgarno sequence preventing ribosome-binding, thus repressing translation. Its main target seems to be the major flagellin gene, while its function is anatagonized by FliW. The polypeptide is Translational regulator CsrA (Helicobacter pylori (strain J99 / ATCC 700824) (Campylobacter pylori J99)).